Consider the following 329-residue polypeptide: NADH-quinone oxidoreductase subunit H (329 aa).

The next 9 helical transmembrane spans lie at 9 to 29, 42 to 62, 75 to 95, 117 to 137, 154 to 174, 188 to 208, 238 to 258, 269 to 291, and 309 to 329; these read LIKI…ATYI, GPCY…IKLF, FIFT…MAPI, IGFL…ILAG, IQLL…LMVV, GGFL…FLIA, LKWG…SFVI, WGFI…LSMW, and WKIM…VILI.

It belongs to the complex I subunit 1 family. NDH-1 is composed of 14 different subunits. Subunits NuoA, H, J, K, L, M, N constitute the membrane sector of the complex.

It localises to the cell inner membrane. The enzyme catalyses a quinone + NADH + 5 H(+)(in) = a quinol + NAD(+) + 4 H(+)(out). NDH-1 shuttles electrons from NADH, via FMN and iron-sulfur (Fe-S) centers, to quinones in the respiratory chain. The immediate electron acceptor for the enzyme in this species is believed to be ubiquinone. Couples the redox reaction to proton translocation (for every two electrons transferred, four hydrogen ions are translocated across the cytoplasmic membrane), and thus conserves the redox energy in a proton gradient. This subunit may bind ubiquinone. In Helicobacter pylori (strain J99 / ATCC 700824) (Campylobacter pylori J99), this protein is NADH-quinone oxidoreductase subunit H.